The following is a 469-amino-acid chain: Glutamate-1-semialdehyde 2,1-aminomutase, chloroplastic (469 aa).

Residues methionine 1–alanine 34 constitute a chloroplast transit peptide. N6-(pyridoxal phosphate)lysine is present on lysine 309.

It belongs to the class-III pyridoxal-phosphate-dependent aminotransferase family. HemL subfamily. As to quaternary structure, homodimer. The cofactor is pyridoxal 5'-phosphate.

It is found in the plastid. The protein resides in the chloroplast. The enzyme catalyses (S)-4-amino-5-oxopentanoate = 5-aminolevulinate. The protein operates within porphyrin-containing compound metabolism; protoporphyrin-IX biosynthesis; 5-aminolevulinate from L-glutamyl-tRNA(Glu): step 2/2. It functions in the pathway porphyrin-containing compound metabolism; chlorophyll biosynthesis. This chain is Glutamate-1-semialdehyde 2,1-aminomutase, chloroplastic (GSA), found in Hordeum vulgare (Barley).